A 609-amino-acid polypeptide reads, in one-letter code: Arginine--tRNA ligase (609 aa).

Positions 132-142 (ANPTSSLHVGH) match the 'HIGH' region motif.

It belongs to the class-I aminoacyl-tRNA synthetase family. Monomer.

It is found in the cytoplasm. It catalyses the reaction tRNA(Arg) + L-arginine + ATP = L-arginyl-tRNA(Arg) + AMP + diphosphate. The polypeptide is Arginine--tRNA ligase (Psychrobacter arcticus (strain DSM 17307 / VKM B-2377 / 273-4)).